The sequence spans 459 residues: Exodeoxyribonuclease 7 large subunit (459 aa).

It belongs to the XseA family. Heterooligomer composed of large and small subunits.

Its subcellular location is the cytoplasm. It catalyses the reaction Exonucleolytic cleavage in either 5'- to 3'- or 3'- to 5'-direction to yield nucleoside 5'-phosphates.. Functionally, bidirectionally degrades single-stranded DNA into large acid-insoluble oligonucleotides, which are then degraded further into small acid-soluble oligonucleotides. This is Exodeoxyribonuclease 7 large subunit from Pseudomonas fluorescens (strain SBW25).